Reading from the N-terminus, the 190-residue chain is E3 ubiquitin-protein ligase RNF4 (190 aa).

The segment at 1 to 16 is required for ubiquitination activity; it reads MSTRKRRGGAINSRQA. Positions 1 to 29 are disordered; that stretch reads MSTRKRRGGAINSRQAQKRTREATSTPEI. Positions 4 to 61 are mediates interaction with TRPS1; that stretch reads RKRRGGAINSRQAQKRTREATSTPEISLEAEPIELVETAGDEIVDLTCESLEPVVVDL. 4 short sequence motifs (SUMO interaction motif) span residues 36–39, 46–49, 57–59, and 67–70; these read IELV, IVDL, VVV, and VVIV. 2 positions are modified to phosphoserine: S94 and S95. The Zn(2+) site is built by C132, C135, C154, H156, C159, C162, C173, and C176. The segment at 132–177 adopts an RING-type zinc-finger fold; it reads CPICMDGYSEIVQNGRLIVSTECGHVFCSQCLRDSLKNANTCPTCR.

In terms of assembly, homodimer (via RING-type zinc finger domain). Interacts with GSC2. Interacts with AR/the androgen receptor and TBP. Interacts with TCF20. Interacts with PATZ1. Interacts with TRPS1; negatively regulates TRPS1 transcriptional repressor activity. Interacts with PML (isoform PML-1, isoform PML-2, isoform PML-3, isoform PML-4, isoform PML-5 and isoform PML-6). Interacts with PRDM1/Blimp-1. In terms of processing, sumoylated; conjugated by one or two SUMO1 moieties. Autoubiquitinated. In terms of tissue distribution, widely expressed at low levels in many tissues; highly expressed in testis.

It localises to the cytoplasm. The protein localises to the nucleus. The protein resides in the PML body. It catalyses the reaction S-ubiquitinyl-[E2 ubiquitin-conjugating enzyme]-L-cysteine + [acceptor protein]-L-lysine = [E2 ubiquitin-conjugating enzyme]-L-cysteine + N(6)-ubiquitinyl-[acceptor protein]-L-lysine.. It functions in the pathway protein modification; protein ubiquitination. In terms of biological role, E3 ubiquitin-protein ligase which binds polysumoylated chains covalently attached to proteins and mediates 'Lys-6'-, 'Lys-11'-, 'Lys-48'- and 'Lys-63'-linked polyubiquitination of those substrates and their subsequent targeting to the proteasome for degradation. Regulates the degradation of several proteins including PML and the transcriptional activator PEA3. Involved in chromosome alignment and spindle assembly, it regulates the kinetochore CENPH-CENPI-CENPK complex by targeting polysumoylated CENPI to proteasomal degradation. Regulates the cellular responses to hypoxia and heat shock through degradation of respectively EPAS1 and PARP1. Alternatively, it may also bind DNA/nucleosomes and have a more direct role in the regulation of transcription for instance enhancing basal transcription and steroid receptor-mediated transcriptional activation. Catalyzes ubiquitination of sumoylated PARP1 in response to PARP1 trapping to chromatin, leading to PARP1 removal from chromatin by VCP/p97. The polypeptide is E3 ubiquitin-protein ligase RNF4 (Homo sapiens (Human)).